We begin with the raw amino-acid sequence, 521 residues long: Glucose-1-phosphate adenylyltransferase small subunit, chloroplastic (521 aa).

The tract at residues 1 to 24 (MAASIGALKSSPSSHNCINERRND) is disordered. A chloroplast-targeting transit peptide spans 1-72 (MAASIGALKS…RSPLIVSPKA (72 aa)).

This sequence belongs to the bacterial/plant glucose-1-phosphate adenylyltransferase family. As to quaternary structure, heterotetramer.

The protein localises to the plastid. It is found in the chloroplast. The catalysed reaction is alpha-D-glucose 1-phosphate + ATP + H(+) = ADP-alpha-D-glucose + diphosphate. Its pathway is glycan biosynthesis; starch biosynthesis. Its activity is regulated as follows. Activated by 3'phosphoglycerate, inhibited by orthophosphate. Allosteric regulation. This protein plays a role in synthesis of starch. It catalyzes the synthesis of the activated glycosyl donor, ADP-glucose from Glc-1-P and ATP. The sequence is that of Glucose-1-phosphate adenylyltransferase small subunit, chloroplastic from Solanum lycopersicum (Tomato).